We begin with the raw amino-acid sequence, 392 residues long: Formate-dependent phosphoribosylglycinamide formyltransferase (392 aa).

N(1)-(5-phospho-beta-D-ribosyl)glycinamide contacts are provided by residues 22–23 (EL) and Glu-82. ATP is bound by residues Arg-114, Lys-155, 160 to 165 (SSGKGQ), 195 to 198 (EGVV), and Glu-203. The region spanning 119-308 (RLAAEELGLP…EFALHVRAFL (190 aa)) is the ATP-grasp domain. The Mg(2+) site is built by Glu-267 and Glu-279. Residues Asp-286, Lys-355, and 362–363 (RR) each bind N(1)-(5-phospho-beta-D-ribosyl)glycinamide.

Belongs to the PurK/PurT family. In terms of assembly, homodimer.

The catalysed reaction is N(1)-(5-phospho-beta-D-ribosyl)glycinamide + formate + ATP = N(2)-formyl-N(1)-(5-phospho-beta-D-ribosyl)glycinamide + ADP + phosphate + H(+). The protein operates within purine metabolism; IMP biosynthesis via de novo pathway; N(2)-formyl-N(1)-(5-phospho-D-ribosyl)glycinamide from N(1)-(5-phospho-D-ribosyl)glycinamide (formate route): step 1/1. Functionally, involved in the de novo purine biosynthesis. Catalyzes the transfer of formate to 5-phospho-ribosyl-glycinamide (GAR), producing 5-phospho-ribosyl-N-formylglycinamide (FGAR). Formate is provided by PurU via hydrolysis of 10-formyl-tetrahydrofolate. This chain is Formate-dependent phosphoribosylglycinamide formyltransferase, found in Salmonella paratyphi B (strain ATCC BAA-1250 / SPB7).